A 99-amino-acid chain; its full sequence is Indole-3-acetic acid-induced protein ARG2 (99 aa).

Residues 40–62 (RGGASIGGNMVPKSGEEKVRGGE) form a disordered region. Positions 53–62 (SGEEKVRGGE) are enriched in basic and acidic residues.

The protein is Indole-3-acetic acid-induced protein ARG2 (ARG2) of Vigna radiata var. radiata (Mung bean).